The primary structure comprises 296 residues: Protoheme IX farnesyltransferase (296 aa).

Residues 1–9 (MMFKQYLQV) lie on the Cytoplasmic side of the membrane. A helical transmembrane segment spans residues 10 to 28 (TKPGIIFGNLISVIGGFLL). At 29-37 (ASKGSIDYP) the chain is on the periplasmic side. The chain crosses the membrane as a helical span at residues 38 to 56 (LFIYTLVGVSLVVASGCVF). Topologically, residues 57 to 78 (NNYIDRDIDRKMERTKNRVLVK) are cytoplasmic. Residues 79–97 (GLISPGVSLVYATLLGIAG) form a helical membrane-spanning segment. Topologically, residues 98–107 (FMLLWFGANP) are periplasmic. Residues 108 to 126 (LACWLGVMGFVVYVGVYSL) traverse the membrane as a helical segment. Residues 127–197 (YMKRHSVYGT…YQAANIPVLP (71 aa)) lie on the Cytoplasmic side of the membrane. Residues 198-216 (VIKGISVAKNHITLYIIAF) form a helical membrane-spanning segment. Over 217 to 228 (AVATLMLTLGGY) the chain is Periplasmic. The chain crosses the membrane as a helical span at residues 229 to 247 (AGYKYLVVAAAVSVWWLGM). At 248–268 (ALRGYKVEDDKVWARKLFGFS) the chain is on the cytoplasmic side. Residues 269 to 287 (IIAITALSIMMSVDFMVPN) traverse the membrane as a helical segment. The Periplasmic segment spans residues 288-296 (SQNLLTYVW).

The protein belongs to the UbiA prenyltransferase family. Protoheme IX farnesyltransferase subfamily.

The protein resides in the cell inner membrane. The catalysed reaction is heme b + (2E,6E)-farnesyl diphosphate + H2O = Fe(II)-heme o + diphosphate. The protein operates within porphyrin-containing compound metabolism; heme O biosynthesis; heme O from protoheme: step 1/1. Functionally, converts heme B (protoheme IX) to heme O by substitution of the vinyl group on carbon 2 of heme B porphyrin ring with a hydroxyethyl farnesyl side group. In Salmonella typhi, this protein is Protoheme IX farnesyltransferase.